The chain runs to 206 residues: MARLAGVAALSLVLVLLGAGVPRPAAAAAAKTQVFLSKLPKALVVGVSPKHGEVVHAGENTVTVTWSLNTSEPAGADAAFKSVKVKLCYAPASRTDRGWRKASDDLHKDKACQFKVTVQPYAAGAGRFDYVVARDIPTASYFVRAYAVDASGTEVAYGQSSPDAAFDVAGITGIHASLKVAAGVFSTFSIAALAFFFVVEKRKKDK.

An N-terminal signal peptide occupies residues 1–27; sequence MARLAGVAALSLVLVLLGAGVPRPAAA. A helical membrane pass occupies residues 180 to 200; that stretch reads VAAGVFSTFSIAALAFFFVVE.

It belongs to the NAR2 family. In terms of assembly, heterotetramer composed of two NRT2.1, NRT2.2 or NRT2.3 and two NAR2.1. Interacts with NRT2.1, NRT2.2 and isoform 1 of NRT2.3. Expressed in epidermal cells of primary and lateral roots, root-shoot junction zone, vascular tissues of adventitious root primordia, stems and coleoptiles of germinating seeds.

It is found in the cell membrane. Acts as a dual component transporter with NTR2.1, NRT2.2 and NRT2.3. Required for high-affinity nitrate transport. Involved in the regulation of NRT2.1, NRT2.2 and NRT2.3 expression, and in both, HATS (high-affinity transport system) and LATS (low-affinity transport system) activities in plant roots. Imports nitrate with high affinity when expressed with NTR2.1, NTR2.2 or NTR2.3 in a heterologous system (Xenopus oocytes). The polypeptide is High-affinity nitrate transporter-activating protein 2.1 (NAR2.1) (Oryza sativa subsp. japonica (Rice)).